We begin with the raw amino-acid sequence, 238 residues long: Ribonuclease 3 (238 aa).

The RNase III domain occupies 11–136; sequence RARLEAAIGY…LIAAIYLDGG (126 aa). Glu49 lines the Mg(2+) pocket. Asp53 is an active-site residue. Residues Asp122 and Glu125 each contribute to the Mg(2+) site. Glu125 is a catalytic residue. The DRBM domain maps to 161 to 230; sequence DAKTELQEWA…AMKLLEREGV (70 aa).

This sequence belongs to the ribonuclease III family. Homodimer. It depends on Mg(2+) as a cofactor.

It is found in the cytoplasm. It carries out the reaction Endonucleolytic cleavage to 5'-phosphomonoester.. Its function is as follows. Digests double-stranded RNA. Involved in the processing of primary rRNA transcript to yield the immediate precursors to the large and small rRNAs (23S and 16S). Processes some mRNAs, and tRNAs when they are encoded in the rRNA operon. Processes pre-crRNA and tracrRNA of type II CRISPR loci if present in the organism. This Rhizobium meliloti (strain 1021) (Ensifer meliloti) protein is Ribonuclease 3.